The following is a 183-amino-acid chain: Ribulose bisphosphate carboxylase small subunit, chloroplastic (183 aa).

The N-terminal 59 residues, 1–59 (MASSMISSGTVATVSADRPAPAQARMVAPFTGLKSSSASPVTRKSNDITSIASNGGRVQ), are a transit peptide targeting the chloroplast.

This sequence belongs to the RuBisCO small chain family. As to quaternary structure, heterohexadecamer of 8 large and 8 small subunits.

The protein localises to the plastid. Its subcellular location is the chloroplast. RuBisCO catalyzes two reactions: the carboxylation of D-ribulose 1,5-bisphosphate, the primary event in carbon dioxide fixation, as well as the oxidative fragmentation of the pentose substrate. Both reactions occur simultaneously and in competition at the same active site. Although the small subunit is not catalytic it is essential for maximal activity. The protein is Ribulose bisphosphate carboxylase small subunit, chloroplastic of Malus sp. (Crab apple).